An 82-amino-acid polypeptide reads, in one-letter code: Small ribosomal subunit protein bS18 (82 aa).

The protein belongs to the bacterial ribosomal protein bS18 family. Part of the 30S ribosomal subunit. Forms a tight heterodimer with protein bS6.

Its function is as follows. Binds as a heterodimer with protein bS6 to the central domain of the 16S rRNA, where it helps stabilize the platform of the 30S subunit. In Chlamydia felis (strain Fe/C-56) (Chlamydophila felis), this protein is Small ribosomal subunit protein bS18.